A 142-amino-acid polypeptide reads, in one-letter code: Putative thiosulfate sulfurtransferase, mitochondrial (142 aa).

Residues 1 to 25 constitute a mitochondrion transit peptide; the sequence is MFSKTLSVSRLLMTRSFYSSTVVKN. The Rhodanese domain maps to 43–140; the sequence is GDKSTVLIDV…SWLEWSDKIK (98 aa). The active-site Cysteine persulfide intermediate is the cysteine 104.

It localises to the mitochondrion. It carries out the reaction thiosulfate + hydrogen cyanide = thiocyanate + sulfite + 2 H(+). In terms of biological role, thiosulfate sulfurtransferase which catalyzes the transfer of sulfane sulfur from thiosulfate to cyanide. This is Putative thiosulfate sulfurtransferase, mitochondrial from Schizosaccharomyces pombe (strain 972 / ATCC 24843) (Fission yeast).